Consider the following 215-residue polypeptide: Soluble inorganic pyrophosphatase (215 aa).

Positions 1 to 21 (MSQEDSTSAAAAQQPTSRPAP) are enriched in low complexity. Residues 1 to 24 (MSQEDSTSAAAAQQPTSRPAPKLN) form a disordered region. Mg(2+) contacts are provided by Asp-103, Asp-108, and Asp-140.

The protein belongs to the PPase family. The cofactor is Mg(2+). Expressed in metabolically active tissue such as root, shoot, embryo and aleurone.

The protein resides in the cytoplasm. The catalysed reaction is diphosphate + H2O = 2 phosphate + H(+). Its function is as follows. May play a role in germination. This Hordeum vulgare subsp. vulgare (Domesticated barley) protein is Soluble inorganic pyrophosphatase (IPP).